A 721-amino-acid chain; its full sequence is Catalase-peroxidase 1 (721 aa).

A cross-link (tryptophyl-tyrosyl-methioninium (Trp-Tyr) (with M-249)) is located at residues 98–223 (WHAAGSYRVA…LAAVQMGLIY (126 aa)). The active-site Proton acceptor is the His-99. A cross-link (tryptophyl-tyrosyl-methioninium (Tyr-Met) (with W-98)) is located at residues 223–249 (YVNPEGVNGQPDPLRTAQDVRVTFGRM). His-264 provides a ligand contact to heme b.

Belongs to the peroxidase family. Peroxidase/catalase subfamily. In terms of assembly, homodimer or homotetramer. The cofactor is heme b. Formation of the three residue Trp-Tyr-Met cross-link is important for the catalase, but not the peroxidase activity of the enzyme.

The catalysed reaction is H2O2 + AH2 = A + 2 H2O. The enzyme catalyses 2 H2O2 = O2 + 2 H2O. Bifunctional enzyme with both catalase and broad-spectrum peroxidase activity. This is Catalase-peroxidase 1 from Legionella pneumophila (strain Paris).